The primary structure comprises 231 residues: CD302 antigen (231 aa).

Positions 1–21 (MSAAVVATLPTLLLLLGLAAA) are cleaved as a signal peptide. The Extracellular portion of the chain corresponds to 22-169 (DCPSSSWVQF…YEKKYLPDHH (148 aa)). Residues 31–153 (FQSNCYIFLQ…CEVSSVEGAL (123 aa)) form the C-type lectin domain. Residue Asn-110 is glycosylated (N-linked (GlcNAc...) asparagine). Cys-129 and Cys-144 are oxidised to a cystine. A helical membrane pass occupies residues 170–190 (ILITALVIASTTILTITGAVV). Over 191–231 (WFLYKRNLTSGLTNTAYTTAPQLPYNDDCILVDAEENEYVA) the chain is Cytoplasmic.

The protein localises to the membrane. Its subcellular location is the cell projection. It is found in the filopodium. It localises to the cytoplasm. The protein resides in the cell cortex. The protein localises to the microvillus. Its function is as follows. Potential multifunctional C-type lectin receptor that may play roles in endocytosis and phagocytosis as well as in cell adhesion and migration. This is CD302 antigen from Trichosurus vulpecula (Brush-tailed possum).